A 214-amino-acid chain; its full sequence is Phosphoenolpyruvate guanylyltransferase 2 (214 aa).

Phosphoenolpyruvate contacts are provided by Thr-135, Gly-150, and Ser-153.

The protein belongs to the CofC family.

The catalysed reaction is phosphoenolpyruvate + GTP + H(+) = enolpyruvoyl-2-diphospho-5'-guanosine + diphosphate. It functions in the pathway cofactor biosynthesis; coenzyme F420 biosynthesis. Functionally, guanylyltransferase that catalyzes the activation of phosphoenolpyruvate (PEP) as enolpyruvoyl-2-diphospho-5'-guanosine, via the condensation of PEP with GTP. It is involved in the biosynthesis of coenzyme F420, a hydride carrier cofactor. This is Phosphoenolpyruvate guanylyltransferase 2 from Rhodococcus jostii (strain RHA1).